A 374-amino-acid chain; its full sequence is Cobalt-precorrin-5B C(1)-methyltransferase (374 aa).

This sequence belongs to the CbiD family.

The catalysed reaction is Co-precorrin-5B + S-adenosyl-L-methionine = Co-precorrin-6A + S-adenosyl-L-homocysteine. The protein operates within cofactor biosynthesis; adenosylcobalamin biosynthesis; cob(II)yrinate a,c-diamide from sirohydrochlorin (anaerobic route): step 6/10. Its function is as follows. Catalyzes the methylation of C-1 in cobalt-precorrin-5B to form cobalt-precorrin-6A. This Synechococcus elongatus (strain ATCC 33912 / PCC 7942 / FACHB-805) (Anacystis nidulans R2) protein is Cobalt-precorrin-5B C(1)-methyltransferase.